Reading from the N-terminus, the 220-residue chain is UPF0502 protein CV_4303 (220 aa).

The protein belongs to the UPF0502 family.

In Chromobacterium violaceum (strain ATCC 12472 / DSM 30191 / JCM 1249 / CCUG 213 / NBRC 12614 / NCIMB 9131 / NCTC 9757 / MK), this protein is UPF0502 protein CV_4303.